A 106-amino-acid chain; its full sequence is V-type proton ATPase subunit G2 (106 aa).

N-acetylmethionine is present on M1. The interval 31–67 (LKQAKEEAETEVAEHKTSTEQGFQRKLEATSGDSGAN) is disordered. Positions 33-58 (QAKEEAETEVAEHKTSTEQGFQRKLE) are enriched in basic and acidic residues.

It belongs to the V-ATPase G subunit family. V-ATPase is a heteromultimeric enzyme composed of a peripheral catalytic V1 complex (components A to H) attached to an integral membrane V0 proton pore complex (components: a, c, c'', d and e).

The protein resides in the vacuole membrane. In terms of biological role, catalytic subunit of the peripheral V1 complex of vacuolar ATPase (V-ATPase). V-ATPase is responsible for acidifying a variety of intracellular compartments in eukaryotic cells. The chain is V-type proton ATPase subunit G2 (VHA-G2) from Arabidopsis thaliana (Mouse-ear cress).